We begin with the raw amino-acid sequence, 340 residues long: Glyceraldehyde-3-phosphate dehydrogenase (340 aa).

NAD(+)-binding positions include 11–12 (SI) and G111. 140–142 (SCN) contributes to the D-glyceraldehyde 3-phosphate binding site. C141 (nucleophile) is an active-site residue. Residue R169 coordinates NAD(+). A D-glyceraldehyde 3-phosphate-binding site is contributed by 195–196 (HG). NAD(+) is bound at residue Q303.

It belongs to the glyceraldehyde-3-phosphate dehydrogenase family. As to quaternary structure, homotetramer.

The protein localises to the cytoplasm. The enzyme catalyses D-glyceraldehyde 3-phosphate + phosphate + NADP(+) = (2R)-3-phospho-glyceroyl phosphate + NADPH + H(+). The catalysed reaction is D-glyceraldehyde 3-phosphate + phosphate + NAD(+) = (2R)-3-phospho-glyceroyl phosphate + NADH + H(+). It functions in the pathway carbohydrate degradation; glycolysis; pyruvate from D-glyceraldehyde 3-phosphate: step 1/5. In Methanococcus maripaludis (strain C6 / ATCC BAA-1332), this protein is Glyceraldehyde-3-phosphate dehydrogenase.